The chain runs to 1988 residues: Sodium channel protein type 9 subunit alpha (1988 aa).

At Met-1–His-125 the chain is on the cytoplasmic side. Over residues Arg-26–Lys-39 the composition is skewed to basic and acidic residues. The interval Arg-26–Ala-55 is disordered. One copy of the I repeat lies at Phe-112–Gln-410. A helical membrane pass occupies residues Ser-126–Met-145. The Extracellular portion of the chain corresponds to Asn-146–Asp-150. Residues Trp-151–Leu-172 traverse the membrane as a helical segment. Over Ala-173–Arg-185 the chain is Cytoplasmic. Residues Asp-186–Phe-204 form a helical membrane-spanning segment. Topologically, residues Val-205 to Val-210 are extracellular. Asn-209 is a glycosylation site (N-linked (GlcNAc...) asparagine). Residues Ser-211–Val-227 form a helical membrane-spanning segment. Topologically, residues Ile-228 to Ser-241 are cytoplasmic. A helical membrane pass occupies residues Val-242–Phe-267. The Extracellular portion of the chain corresponds to Met-268–Thr-346. Cys-275 and Cys-324 form a disulfide bridge. A glycan (N-linked (GlcNAc...) asparagine) is linked at Asn-283. The segment at residues Phe-347–Trp-363 is an intramembrane region (pore-forming). Topologically, residues Glu-364–Lys-376 are extracellular. A helical transmembrane segment spans residues Thr-377–Ala-402. Residues Met-403–Phe-745 are Cytoplasmic-facing. Over residues Ser-461–Lys-471 the composition is skewed to low complexity. Disordered regions lie at residues Ser-461–Leu-543 and Gly-565–Met-611. The segment covering Lys-474–Lys-486 has biased composition (basic residues). Basic and acidic residues-rich tracts occupy residues Ser-489–Arg-510 and Asp-573–Arg-585. The II repeat unit spans residues Cys-726 to Gln-989. A helical membrane pass occupies residues Val-746–Ala-762. The Extracellular portion of the chain corresponds to Met-763–Glu-771. The helical transmembrane segment at Phe-772–Ile-796 threads the bilayer. The Cytoplasmic portion of the chain corresponds to Ala-797–Gln-805. The chain crosses the membrane as a helical span at residues Val-806–Glu-822. Residues Leu-823 to Leu-831 are Extracellular-facing. Residues Ser-832–Ser-848 form a helical membrane-spanning segment. Residues Trp-849–Ala-865 lie on the Cytoplasmic side of the membrane. Residues Leu-866–Phe-888 traverse the membrane as a helical segment. Topologically, residues Gly-889–His-915 are extracellular. Cys-897 and Cys-903 are joined by a disulfide. The segment at residues Ser-916–Trp-928 is an intramembrane region (pore-forming). Residues Ile-929–Gly-940 lie on the Extracellular side of the membrane. Cys-935 and Cys-944 are joined by a disulfide. Residues Gln-941–Leu-967 traverse the membrane as a helical segment. Residues Leu-968–Lys-1187 are Cytoplasmic-facing. The disordered stretch occupies residues Asn-1102–Ser-1148. Residues Asn-1120–Asp-1131 show a composition bias toward polar residues. The segment covering Glu-1137–Ser-1148 has biased composition (acidic residues). Residues Asn-1180–Leu-1488 form an III repeat. Residues Ile-1188–Glu-1212 form a helical membrane-spanning segment. The Extracellular portion of the chain corresponds to Asp-1213–Ile-1224. The chain crosses the membrane as a helical span at residues Ile-1225 to Tyr-1250. Residues Lys-1251–Thr-1252 are Cytoplasmic-facing. The helical transmembrane segment at Tyr-1253–Leu-1278 threads the bilayer. Over Gly-1279 to Lys-1287 the chain is Extracellular. Residues Ser-1288–Phe-1304 traverse the membrane as a helical segment. Residues Glu-1305–Ala-1317 lie on the Cytoplasmic side of the membrane. A helical membrane pass occupies residues Ile-1318 to Leu-1342. Residues Phe-1343 to Leu-1394 lie on the Extracellular side of the membrane. Cys-1350 and Cys-1370 are disulfide-bonded. N-linked (GlcNAc...) asparagine glycosylation is found at Asn-1352, Asn-1366, and Asn-1375. An intramembrane region (pore-forming) is located at residues Gly-1395–Phe-1405. At Lys-1406–Leu-1431 the chain is on the extracellular side. A helical transmembrane segment spans residues Tyr-1432–Ile-1457. Residues Asp-1458–Asn-1514 are Cytoplasmic-facing. Position 1490 is a phosphoserine; by PKC (Ser-1490). Residues Ile-1497–Gln-1795 form an IV repeat. Residues Gln-1515–Val-1534 form a helical membrane-spanning segment. Residues Glu-1535–Glu-1545 lie on the Extracellular side of the membrane. A helical membrane pass occupies residues Val-1546 to Ile-1567. The Cytoplasmic portion of the chain corresponds to Ser-1568–Val-1576. Residues Gly-1577 to Leu-1598 form a helical membrane-spanning segment. Topologically, residues Ile-1599–Thr-1607 are extracellular. The helical transmembrane segment at Leu-1608–Ala-1627 threads the bilayer. The Cytoplasmic segment spans residues Lys-1628 to Ser-1640. A helical membrane pass occupies residues Leu-1641–Met-1663. Residues Ser-1664–Asn-1686 are Extracellular-facing. The segment at residues Ser-1687–Gly-1699 is an intramembrane region (pore-forming). Topologically, residues Trp-1700–Pro-1733 are extracellular. Cys-1715 and Cys-1730 are joined by a disulfide. The helical transmembrane segment at Ser-1734–Ile-1759 threads the bilayer. Over Leu-1760–Lys-1988 the chain is Cytoplasmic. Positions Glu-1889 to Lys-1918 constitute an IQ domain. The disordered stretch occupies residues Phe-1934–Lys-1988. Low complexity predominate over residues Ala-1948–Val-1961. A compositionally biased stretch (basic and acidic residues) spans Thr-1962–Lys-1988.

It belongs to the sodium channel (TC 1.A.1.10) family. Nav1.7/SCN9A subfamily. In terms of assembly, the Nav1.7 voltage-gated sodium channel consists of an ion-conducting alpha subunit SCN9A which is functional on its own regulated by one or more beta-1 (SCN1B), beta-2 (SCN2B), beta-3 (SCN3B) and beta-4 (SCN4B) subunits. SCN1B and SCN3B are non-covalently associated with SCN9A. SCN2B and SCN4B are disulfide-linked to SCN9A. SCN1B regulates channel inactivation. Interacts with NEDD4 and NEDD4L; regulates Nav1.7 activity most probably through ubiquitination and subsequent endocytosis. Interacts with TMEM233; modulates the gating properties of NaV1.7. Post-translationally, phosphorylation at Ser-1490 by PKC in a highly conserved cytoplasmic loop increases peak sodium currents. In terms of processing, ubiquitinated by NEDD4L; which may promote its endocytosis. In terms of tissue distribution, expressed strongly in dorsal root ganglion, with only minor levels elsewhere in the body, smooth muscle cells, MTC cell line and C-cell carcinoma. Also expressed in vagus nerves within the head and neck region. Isoform 1 is expressed preferentially in the central and peripheral nervous system. Isoform 2 is expressed preferentially in the dorsal root ganglion.

The protein resides in the cell membrane. The protein localises to the cell projection. It localises to the neuron projection. Its subcellular location is the axon. The enzyme catalyses Na(+)(in) = Na(+)(out). Its activity is regulated as follows. Inhibited by tetrodotoxin. Weakly inhibited by saxitoxin. Inhibited by the spider huwentoxin-IV that binds the extracellular loop S3-S4 of repeat II. Inhibited by the spider protoxin-II that binds the extracellular loop S3-S4 of repeats II and IV. Inhibited by the scorpion alpha-toxins CvIV4 and AaH2. Inhibited by the conotoxin GVIIJ. Inhibited by the spider beta/delta-theraphotoxin-Pre1a. Pore-forming subunit of Nav1.7, a voltage-gated sodium (Nav) channel that directly mediates the depolarizing phase of action potentials in excitable membranes. Navs, also called VGSCs (voltage-gated sodium channels) or VDSCs (voltage-dependent sodium channels), operate by switching between closed and open conformations depending on the voltage difference across the membrane. In the open conformation they allow Na(+) ions to selectively pass through the pore, along their electrochemical gradient. The influx of Na(+) ions provokes membrane depolarization, initiating the propagation of electrical signals throughout cells and tissues. Nav1.7 plays a crucial role in controlling the excitability and action potential propagation from nociceptor neurons, thereby contributing to the sensory perception of pain. This is Sodium channel protein type 9 subunit alpha from Homo sapiens (Human).